Here is a 357-residue protein sequence, read N- to C-terminus: Quinolinate synthase (357 aa).

Positions 50 and 71 each coordinate iminosuccinate. C116 serves as a coordination point for [4Fe-4S] cluster. Iminosuccinate is bound by residues 142 to 144 (YAN) and S159. C203 lines the [4Fe-4S] cluster pocket. Residues 229 to 231 (HPE) and T246 each bind iminosuccinate. C300 is a [4Fe-4S] cluster binding site.

It belongs to the quinolinate synthase family. Type 1 subfamily. The cofactor is [4Fe-4S] cluster.

The protein resides in the cytoplasm. It catalyses the reaction iminosuccinate + dihydroxyacetone phosphate = quinolinate + phosphate + 2 H2O + H(+). Its pathway is cofactor biosynthesis; NAD(+) biosynthesis; quinolinate from iminoaspartate: step 1/1. Catalyzes the condensation of iminoaspartate with dihydroxyacetone phosphate to form quinolinate. This is Quinolinate synthase from Shewanella oneidensis (strain ATCC 700550 / JCM 31522 / CIP 106686 / LMG 19005 / NCIMB 14063 / MR-1).